The sequence spans 243 residues: MHKSNNKIRQRIIIKLSGAGLTKENSQPFSNDFFETIINQLKVLKESYQVGIVIGGGNIIRGNNCQEFNIAEYHGHQLGIIATVVNGYFLKAKLDAHNLKSALLSAISCPSLAVQILSQQTIDKAFEENDFVIFSGGTGNPYFSTDTALALRAVQTKAVAILIGKNGVDGVYTADPKKDKNATFLPTLNYDHAIKNDLKIMDITAFTMCKENNLKIIIFNINAENALLDALNKKGRFTIIENN.

Residue 15 to 18 (KLSG) coordinates ATP. UMP is bound at residue Gly56. Gly57 and Arg61 together coordinate ATP. 138-145 (TGNPYFST) provides a ligand contact to UMP. Residues Asn166, Tyr172, and Asp175 each contribute to the ATP site.

Belongs to the UMP kinase family. Homohexamer.

Its subcellular location is the cytoplasm. It carries out the reaction UMP + ATP = UDP + ADP. The protein operates within pyrimidine metabolism; CTP biosynthesis via de novo pathway; UDP from UMP (UMPK route): step 1/1. Inhibited by UTP. Catalyzes the reversible phosphorylation of UMP to UDP. The chain is Uridylate kinase from Mycoplasma genitalium (strain ATCC 33530 / DSM 19775 / NCTC 10195 / G37) (Mycoplasmoides genitalium).